Reading from the N-terminus, the 44-residue chain is Unknown protein 9 (44 aa).

The sequence is that of Unknown protein 9 from Pseudotsuga menziesii (Douglas-fir).